Consider the following 603-residue polypeptide: Pyruvate oxidase (603 aa).

Positions 1 to 191 (MVMKQTKQTN…WYASANSYQT (191 aa)) are core. An FAD-binding region spans residues 192–342 (PLLPEPDVQA…ILAQVSERES (151 aa)). The thiamine pyrophosphate binding stretch occupies residues 343 to 603 (TPWWQANLAN…LQHQIGQGGF (261 aa)). Residues D447, N474, and Q476 each coordinate Mg(2+).

The protein belongs to the TPP enzyme family. Homotetramer. Requires FAD as cofactor. Mg(2+) serves as cofactor. It depends on thiamine diphosphate as a cofactor.

It carries out the reaction pyruvate + phosphate + O2 + H(+) = acetyl phosphate + H2O2 + CO2. Functionally, important for the aerobic growth. Decarboxylates pyruvate in four steps. The energy released is partially stored in acetyl phosphate. This Lactiplantibacillus plantarum (strain ATCC BAA-793 / NCIMB 8826 / WCFS1) (Lactobacillus plantarum) protein is Pyruvate oxidase (pox5).